The primary structure comprises 928 residues: Neuropilin-1 (928 aa).

Residues 1–21 (MLLRLLSCCCWLLCSLRSSWA) form the signal peptide. At 22–860 (SRNDKCGDTI…PGNVLKTLDP (839 aa)) the chain is on the extracellular side. Intrachain disulfides connect cysteine 27-cysteine 54, cysteine 82-cysteine 104, and cysteine 147-cysteine 173. CUB domains are found at residues 27-141 (CGDT…YEVF) and 147-265 (CSRN…FSVV). N-linked (GlcNAc...) asparagine glycosylation occurs at asparagine 150. Glutamate 195, aspartate 209, and aspartate 250 together coordinate Ca(2+). A disulfide bond links cysteine 206 and cysteine 228. 3 N-linked (GlcNAc...) asparagine glycosylation sites follow: asparagine 261, asparagine 300, and asparagine 523. 2 cysteine pairs are disulfide-bonded: cysteine 275–cysteine 424 and cysteine 431–cysteine 584. F5/8 type C domains are found at residues 275 to 424 (CKEA…LYGC) and 431 to 584 (CSRM…LLGC). Residue serine 613 is glycosylated (O-linked (Xyl...) (chondroitin sulfate) serine; alternate). Residue serine 613 is glycosylated (O-linked (Xyl...) (heparan sulfate) serine; alternate). A disordered region spans residues 624–645 (GATGQSTETPTVEASPEEPDMT). Positions 625–635 (ATGQSTETPTV) are enriched in polar residues. Residues 646–812 (HSDLDCKFGW…NHISPSQCRA (167 aa)) form the MAM domain. Serine 834 carries O-linked (Xyl...) (chondroitin sulfate) serine glycosylation. An N-linked (GlcNAc...) asparagine glycan is attached at asparagine 844. A helical membrane pass occupies residues 861-883 (ILITIIAMSALGVLLGAICGVVL). The Cytoplasmic portion of the chain corresponds to 884 to 928 (YCACWHNGMSERNLSALENYNFELVDGVKLKKDKLNTQNSYSEAS).

Belongs to the neuropilin family. As to quaternary structure, homodimer, and heterodimer. In terms of tissue distribution, retinal ganglion cells and visual center neurons.

The protein localises to the mitochondrion membrane. It localises to the cell membrane. In terms of biological role, receptor involved in the development of the cardiovascular system, in angiogenesis, in the formation of certain neuronal circuits and in organogenesis outside the nervous system. Mediates the chemorepulsant activity of semaphorins. Binding to VEGFA initiates a signaling pathway needed for motor neuron axon guidance and cell body migration, including for the caudal migration of facial motor neurons from rhombomere 4 to rhombomere 6 during embryonic development. Regulates mitochondrial iron transport via interaction. This is Neuropilin-1 (nrp1) from Xenopus laevis (African clawed frog).